The primary structure comprises 40 residues: U1-ectatotoxin-Eb1a subunit A (40 aa).

The protein belongs to the ectatomin family. Ectatomin-Eq subfamily. Heterodimer of subunits A and B; disulfide-linked. As to expression, expressed by the venom gland.

It localises to the secreted. It is found in the target cell membrane. The sequence is that of U1-ectatotoxin-Eb1a subunit A from Ectatomma brunneum (Ant).